Here is a 144-residue protein sequence, read N- to C-terminus: uncharacterized protein (144 aa).

The segment covering 124–133 has biased composition (basic residues); the sequence is KALNRKKSKT. The interval 124 to 144 is disordered; sequence KALNRKKSKTKNGEKNGEGKS. Residues 134–144 show a composition bias toward basic and acidic residues; sequence KNGEKNGEGKS.

This is an uncharacterized protein from Acidianus filamentous virus 1 (isolate United States/Yellowstone) (AFV-1).